The following is a 270-amino-acid chain: Protein FAM110D (270 aa).

Positions 1–16 (MLLASPSTPSRGRTPS) are enriched in low complexity. 3 disordered regions span residues 1–83 (MLLA…RPDS), 117–142 (RDVA…PQDA), and 186–244 (PQSW…QVSV). Residues 68 to 78 (RPARRGSGRRL) show a composition bias toward basic residues.

Belongs to the FAM110 family.

The protein is Protein FAM110D (FAM110D) of Bos taurus (Bovine).